The chain runs to 43 residues: Metallothionein-2 (43 aa).

At Met-1 the chain carries Blocked amino end (Met).

The protein belongs to the metallothionein superfamily. Type 5 family.

This protein binds cations of several transition elements. Thought to be involved in metal ion homeostasis. This is Metallothionein-2 (MtnB) from Drosophila melanogaster (Fruit fly).